The sequence spans 322 residues: Transcription cofactor vestigial-like protein 2 (322 aa).

The segment covering 42 to 61 (ASPGSSASGSSSFSNPTPAS) has biased composition (low complexity). 2 disordered regions span residues 42–75 (ASPG…ERPP) and 248–322 (PGRL…PTLG). The span at 62–75 (VKEEEGSPEKERPP) shows a compositional bias: basic and acidic residues. Composition is skewed to low complexity over residues 248 to 258 (PGRLAPASAPA) and 270 to 283 (GEPA…PGGP). Pro residues predominate over residues 312-322 (SAPPALYPTLG).

The protein belongs to the vestigial family. As to quaternary structure, interacts with TEFs. Binds to TEAD1/TEF1. Skeletal muscle specific.

It localises to the nucleus. Its function is as follows. May act as a specific coactivator for the mammalian TEFs. May play a role in the development of skeletal muscles. In Mus musculus (Mouse), this protein is Transcription cofactor vestigial-like protein 2 (Vgll2).